The chain runs to 312 residues: Porphobilinogen deaminase (312 aa).

Cys-243 bears the S-(dipyrrolylmethanemethyl)cysteine mark.

It belongs to the HMBS family. Monomer. Requires dipyrromethane as cofactor.

It catalyses the reaction 4 porphobilinogen + H2O = hydroxymethylbilane + 4 NH4(+). Its pathway is porphyrin-containing compound metabolism; protoporphyrin-IX biosynthesis; coproporphyrinogen-III from 5-aminolevulinate: step 2/4. Functionally, tetrapolymerization of the monopyrrole PBG into the hydroxymethylbilane pre-uroporphyrinogen in several discrete steps. This is Porphobilinogen deaminase from Vibrio parahaemolyticus serotype O3:K6 (strain RIMD 2210633).